A 266-amino-acid polypeptide reads, in one-letter code: Probable phosphoadenosine phosphosulfate reductase (266 aa).

The tract at residues 219-246 (TQPVREGEDERAGRWRGREKTECGLHSH) is disordered. The span at 223-243 (REGEDERAGRWRGREKTECGL) shows a compositional bias: basic and acidic residues.

This sequence belongs to the PAPS reductase family. CysH subfamily.

The protein localises to the cytoplasm. It localises to the nucleus. The enzyme catalyses [thioredoxin]-disulfide + sulfite + adenosine 3',5'-bisphosphate + 2 H(+) = [thioredoxin]-dithiol + 3'-phosphoadenylyl sulfate. The protein operates within sulfur metabolism; hydrogen sulfide biosynthesis; sulfite from sulfate: step 3/3. The NADP dependent reduction of PAPS into sulfite involves thioredoxin which probably plays the role of a thiol carrier. Required for methionine synthesis. This is Probable phosphoadenosine phosphosulfate reductase (met16) from Schizosaccharomyces pombe (strain 972 / ATCC 24843) (Fission yeast).